The sequence spans 655 residues: p-hydroxybenzoic acid efflux pump subunit AaeB (655 aa).

A run of 11 helical transmembrane segments spans residues 13–33 (FAVKLACAIVLALFIGFHFQL), 38–58 (WAVLTAAIVAAGPAFAAGGEP), 69–89 (LRIIGTFIGCIAALIIIISMI), 93–113 (LLMILVCCVWAGFCTWISSLV), 121–141 (WGLSGYTALIIVITIQTEPLL), 152–172 (EIVIGIGCAILADLLFSPRSI), 370–390 (LFWLWTGWTSGNGAMVMIAVV), 407–427 (FIYGTLAALPLGLLYFLVIIP), 431–451 (QSMLLLCLSLAVLGFFIGIEV), 459–479 (MGALASTINIIVLDNPMTFHF), and 482–502 (FLDSALGQIVGCMLAFIVILL).

The protein belongs to the aromatic acid exporter ArAE (TC 2.A.85) family.

The protein localises to the cell inner membrane. In terms of biological role, forms an efflux pump with AaeA. Could function as a metabolic relief valve, allowing to eliminate certain compounds when they accumulate to high levels in the cell. The protein is p-hydroxybenzoic acid efflux pump subunit AaeB of Salmonella arizonae (strain ATCC BAA-731 / CDC346-86 / RSK2980).